Consider the following 628-residue polypeptide: NUAK family SNF1-like kinase 2 (628 aa).

M1 bears the N-acetylmethionine mark. The 251-residue stretch at Y53–V303 folds into the Protein kinase domain. ATP contacts are provided by residues L59 to V67 and K81. The Proton acceptor role is filled by D175. At T208 the chain carries Phosphothreonine; by LKB1. The tract at residues K355–G493 is disordered. At S435 the chain carries Phosphoserine. The span at S457–G469 shows a compositional bias: low complexity. S523, S544, S547, and S573 each carry phosphoserine. A disordered region spans residues R531–R562.

Belongs to the protein kinase superfamily. CAMK Ser/Thr protein kinase family. SNF1 subfamily. It depends on Mg(2+) as a cofactor. In terms of processing, phosphorylated at Thr-208 by STK11/LKB1 in complex with STE20-related adapter-alpha (STRADA) pseudo kinase and CAB39. Autophosphorylation is also possible at Thr-208.

It catalyses the reaction L-seryl-[protein] + ATP = O-phospho-L-seryl-[protein] + ADP + H(+). It carries out the reaction L-threonyl-[protein] + ATP = O-phospho-L-threonyl-[protein] + ADP + H(+). Activated by phosphorylation on Thr-208. Its function is as follows. Stress-activated kinase involved in tolerance to glucose starvation. Induces cell-cell detachment by increasing F-actin conversion to G-actin. Expression is induced by CD95 or TNF-alpha, via NF-kappa-B. Protects cells from CD95-mediated apoptosis and is required for the increased motility and invasiveness of CD95-activated tumor cells. Phosphorylates LATS1 and LATS2. Plays a key role in neural tube closure during embryonic development through LATS2 phosphorylation and regulation of the nuclear localization of YAP1 a critical downstream regulatory target in the Hippo signaling pathway. In Homo sapiens (Human), this protein is NUAK family SNF1-like kinase 2.